The chain runs to 212 residues: Adenylate kinase (212 aa).

ATP is bound at residue 10 to 15 (GAGKGT). Residues 30 to 59 (AIGDIFRTIIKTSTSEAELINNYVKQGELI) are NMP. Residues Arg36, 57–59 (ELI), 85–88 (GYPR), and Gln92 contribute to the AMP site. The LID stretch occupies residues 122 to 160 (GRYSCKNCGKIYNRYFLQPKTDNVCDVCGSSTFDYRKDD). ATP is bound at residue Arg123. Residues Cys126 and Cys129 each coordinate Zn(2+). ATP is bound at residue 132 to 133 (IY). Zn(2+)-binding residues include Cys146 and Cys149. AMP-binding residues include Arg157 and Arg168. ATP is bound at residue Lys196.

The protein belongs to the adenylate kinase family. Monomer.

The protein localises to the cytoplasm. The enzyme catalyses AMP + ATP = 2 ADP. It functions in the pathway purine metabolism; AMP biosynthesis via salvage pathway; AMP from ADP: step 1/1. Functionally, catalyzes the reversible transfer of the terminal phosphate group between ATP and AMP. Plays an important role in cellular energy homeostasis and in adenine nucleotide metabolism. The polypeptide is Adenylate kinase (Rickettsia africae (strain ESF-5)).